Here is a 450-residue protein sequence, read N- to C-terminus: Hydrolase ffsE (450 aa).

Ser266 serves as the catalytic Nucleophile.

This sequence belongs to the AB hydrolase superfamily. FUS2 hydrolase family. Homodimer.

It functions in the pathway mycotoxin biosynthesis. Hydrolase; part of the gene cluster that mediates the biosynthesis of the cytotoxic leucine-containing cytochalasans, including aspochalasin C, aspochalasin E, TMC-169, flavichalasine F, aspergillin PZ, aspochalasin M and flavichalasine G. The first step in the pathway is catalyzed by the hybrid PKS-NRPS ffsA that utilizes 8 units of malonyl-CoA to iteratively assemble the octaketide chain before addition of L-leucine by the C-terminal NRPS modules. Because ffsA lacks a designated enoylreductase (ER) domain, the required activity is provided the enoyl reductase fssC. The methyltransferase (MT) domain of ffsA catalyzes the alpha-methylation at C10 and C14 using S-adenosyl-L-methionine as the methyl-donating cosubstrate. Reduction by the hydrolyase ffsE, followed by dehydration and intra-molecular Diels-Alder cyclization by the Diels-Alderase ffsF then yield the required isoindolone-fused macrocycle. A number of oxidative steps catalyzed by the tailoring cytochrome P450 monooxygenase ffsD, the FAD-linked oxidoreductase ffsJ and the short-chain dehydrogenase/reductase ffsI, are further required to afford the final products. In Aspergillus flavipes, this protein is Hydrolase ffsE.